The sequence spans 150 residues: Large ribosomal subunit protein bL9 (150 aa).

Belongs to the bacterial ribosomal protein bL9 family.

In terms of biological role, binds to the 23S rRNA. This is Large ribosomal subunit protein bL9 from Lactococcus lactis subsp. cremoris (strain SK11).